The chain runs to 130 residues: Gloverin (130 aa).

In terms of tissue distribution, hemolymph.

It is found in the secreted. Its function is as follows. Antibacterial protein active against Gram-negative bacteria. The polypeptide is Gloverin (Hyalophora cecropia (Cecropia moth)).